A 386-amino-acid chain; its full sequence is 5-amino-6-(D-ribitylamino)uracil--L-tyrosine 4-hydroxyphenyl transferase (386 aa).

The Radical SAM core domain maps to 56–303 (VSYVINRNLN…MAVARLYLGD (248 aa)). The [4Fe-4S] cluster site is built by C70, C74, and C77.

It belongs to the radical SAM superfamily. CofH family. As to quaternary structure, consists of two subunits, CofG and CofH. [4Fe-4S] cluster is required as a cofactor.

The enzyme catalyses 5-amino-6-(D-ribitylamino)uracil + L-tyrosine + S-adenosyl-L-methionine = 5-amino-5-(4-hydroxybenzyl)-6-(D-ribitylimino)-5,6-dihydrouracil + 2-iminoacetate + 5'-deoxyadenosine + L-methionine + H(+). It participates in cofactor biosynthesis; coenzyme F0 biosynthesis. Its function is as follows. Catalyzes the radical-mediated synthesis of 5-amino-5-(4-hydroxybenzyl)-6-(D-ribitylimino)-5,6-dihydrouracil from 5-amino-6-(D-ribitylamino)uracil and L-tyrosine. In Synechococcus elongatus (strain ATCC 33912 / PCC 7942 / FACHB-805) (Anacystis nidulans R2), this protein is 5-amino-6-(D-ribitylamino)uracil--L-tyrosine 4-hydroxyphenyl transferase.